A 227-amino-acid chain; its full sequence is Phosphoglycolate phosphatase (227 aa).

The Nucleophile role is filled by aspartate 8. Residues aspartate 8 and aspartate 10 each coordinate Mg(2+). Lysine 150 is a substrate binding site. 2 residues coordinate Mg(2+): aspartate 173 and aspartate 177.

This sequence belongs to the archaeal SPP-like hydrolase family. The cofactor is Mg(2+).

It catalyses the reaction 2-phosphoglycolate + H2O = glycolate + phosphate. Functionally, catalyzes the dephosphorylation of 2-phosphoglycolate. The chain is Phosphoglycolate phosphatase from Sulfolobus acidocaldarius (strain ATCC 33909 / DSM 639 / JCM 8929 / NBRC 15157 / NCIMB 11770).